The sequence spans 173 residues: CKLF-like MARVEL transmembrane domain-containing protein 8 (173 aa).

An MARVEL domain is found at 36–168 (FLRTLPGLLI…NTYFSFIAWR (133 aa)). 4 consecutive transmembrane segments (helical) span residues 40–60 (LPGL…TLIA), 70–90 (FGWV…FLII), 105–125 (TTVG…AAIV), and 147–167 (FFAF…FIAW).

It belongs to the chemokine-like factor family.

Its subcellular location is the membrane. The polypeptide is CKLF-like MARVEL transmembrane domain-containing protein 8 (CMTM8) (Bos taurus (Bovine)).